A 266-amino-acid polypeptide reads, in one-letter code: 22 kDa alpha-zein 8 (266 aa).

The N-terminal stretch at 1–21 (MATKILALLALLALFVSATNA) is a signal peptide.

It belongs to the zein family.

Zeins are major seed storage proteins. The sequence is that of 22 kDa alpha-zein 8 from Zea mays (Maize).